Consider the following 223-residue polypeptide: Deoxyribose-phosphate aldolase (223 aa).

Asp89 serves as the catalytic Proton donor/acceptor. The active-site Schiff-base intermediate with acetaldehyde is Lys152. Residue Lys181 is the Proton donor/acceptor of the active site.

This sequence belongs to the DeoC/FbaB aldolase family. DeoC type 1 subfamily.

It is found in the cytoplasm. It catalyses the reaction 2-deoxy-D-ribose 5-phosphate = D-glyceraldehyde 3-phosphate + acetaldehyde. The protein operates within carbohydrate degradation; 2-deoxy-D-ribose 1-phosphate degradation; D-glyceraldehyde 3-phosphate and acetaldehyde from 2-deoxy-alpha-D-ribose 1-phosphate: step 2/2. Its function is as follows. Catalyzes a reversible aldol reaction between acetaldehyde and D-glyceraldehyde 3-phosphate to generate 2-deoxy-D-ribose 5-phosphate. The sequence is that of Deoxyribose-phosphate aldolase from Bacillus cereus (strain B4264).